The following is a 201-amino-acid chain: MTESESAAVPVDAAAYREAMSRLASAVHLITTDGPGGRAGFTASAVCSVSDAPPTLLVCINRTSSAYAALTQNGTLCVNTLGEGHETVAGLFGGRTPVDERFAAGTWRRLRSGALALTDALVSFDCRIVGRHAVGSHDVLYCAVEAVAASGQADALLYSERRYRTLPRAPRSGAAPAEPARAARALGARPAEGPALALRSA.

Residues 169–201 (APRSGAAPAEPARAARALGARPAEGPALALRSA) are disordered.

Belongs to the non-flavoprotein flavin reductase family. RutF subfamily.

The catalysed reaction is FMNH2 + NAD(+) = FMN + NADH + 2 H(+). Its function is as follows. Catalyzes the reduction of FMN to FMNH2 which is used to reduce pyrimidine by RutA via the Rut pathway. In Methylorubrum extorquens (strain ATCC 14718 / DSM 1338 / JCM 2805 / NCIMB 9133 / AM1) (Methylobacterium extorquens), this protein is FMN reductase (NADH) RutF.